The chain runs to 648 residues: Bifunctional protein TilS/HprT (648 aa).

Residue 29-34 participates in ATP binding; that stretch reads SGGPDS. Asp627 contributes to the Mg(2+) binding site.

In the N-terminal section; belongs to the tRNA(Ile)-lysidine synthase family. This sequence in the C-terminal section; belongs to the purine/pyrimidine phosphoribosyltransferase family. The cofactor is Mg(2+).

The protein localises to the cytoplasm. The catalysed reaction is IMP + diphosphate = hypoxanthine + 5-phospho-alpha-D-ribose 1-diphosphate. It carries out the reaction GMP + diphosphate = guanine + 5-phospho-alpha-D-ribose 1-diphosphate. It catalyses the reaction cytidine(34) in tRNA(Ile2) + L-lysine + ATP = lysidine(34) in tRNA(Ile2) + AMP + diphosphate + H(+). In terms of biological role, ligates lysine onto the cytidine present at position 34 of the AUA codon-specific tRNA(Ile) that contains the anticodon CAU, in an ATP-dependent manner. Cytidine is converted to lysidine, thus changing the amino acid specificity of the tRNA from methionine to isoleucine. This is Bifunctional protein TilS/HprT (tilS/hprT) from Listeria innocua serovar 6a (strain ATCC BAA-680 / CLIP 11262).